A 487-amino-acid polypeptide reads, in one-letter code: Recombining binding protein suppressor of hairless (487 aa).

DNA-binding regions lie at residues 44–54 and 152–157; these read QKSYGNEKRFF and SKPSKK. At K162 the chain carries N6-acetyllysine. A DNA-binding region spans residues 179–184; sequence RLRSQT. The IPT/TIG domain occupies 342-432; sequence PVVESLQLNG…YSTSLTFTYT (91 aa). Over residues 452-468 the composition is skewed to polar residues; that stretch reads SSQVPPNESNTNSEGSY. The tract at residues 452 to 487 is disordered; it reads SSQVPPNESNTNSEGSYTNVSTNSTSVTSSTATVVS. Residues 469–487 are compositionally biased toward low complexity; the sequence is TNVSTNSTSVTSSTATVVS.

Belongs to the Su(H) family. Interacts with activated NOTCH1, NOTCH2 or NOTCH3. Interacts with MINT/SHARP. This interaction may mediate the recruitment of large corepressor complexes containing proteins such as HDAC1, HDAC2, NCOR2, SAP30, FHL1/KYOT2 and CIR1. Interacts with EP300, MAML1 and PTF1A. Interacts with RITA1, leading to nuclear export, prevent the interaction between RBPJ and NICD product and subsequent down-regulation of the Notch signaling pathway. Interacts with SNW1. Interacts with CHCHD2 and CXXC5. Interacts with BEND6 (via BEN domain). Interacts with NKAPL. Interacts with ZMIZ1. Interacts with RBM15. Interacts with L3MBTL3 and KDM1A; the interaction with KDM1A is weaker in the absence of L3MBTL3 and the interaction with L3MBTL3 is impaired by Notch-derived peptides containing the intracellular domain (NICD).

It is found in the nucleus. It localises to the cytoplasm. Its function is as follows. Transcriptional regulator that plays a central role in Notch signaling, a signaling pathway involved in cell-cell communication that regulates a broad spectrum of cell-fate determinations. Acts as a transcriptional repressor when it is not associated with Notch proteins. When associated with some NICD product of Notch proteins (Notch intracellular domain), it acts as a transcriptional activator that activates transcription of Notch target genes. Probably represses or activates transcription via the recruitment of chromatin remodeling complexes containing histone deacetylase or histone acetylase proteins, respectively. Specifically binds to the immunoglobulin kappa-type J segment recombination signal sequence. Binds specifically to methylated DNA. Binds to the oxygen responsive element of COX4I2 and activates its transcription under hypoxia conditions (4% oxygen). Negatively regulates the phagocyte oxidative burst in response to bacterial infection by repressing transcription of NADPH oxidase subunits. The polypeptide is Recombining binding protein suppressor of hairless (RBPJ) (Bos taurus (Bovine)).